The sequence spans 431 residues: MIRFAPSPTGDMHIGNLRVAIFNYIEAKKRNERFLIRIEDTDIERNIEGKDQEILQILDTFGLQYDDVVYQSKNFSFHQNFAYKLLNEGKAFACFCTPQELEKEREQAKKEKRAYRYSGKCENITLDEASQRGEPFVVRIKKPTGTIEFDDIIKGHLAFEPNEVDSFVILRADARPTYNFACAVDDMLYDITLVIRGEDHVSNTPKQIHIRNLLGYDKKIEYAHLPIILNEEGKKMSKRDKASSVKWLLEEGFLPEAIANYLILLGNKTPKEIFTLDEAIAWFDLKNISKAPAKFDIEKLRFINRAHLQMMSEEELEKALGVDEGLGALAKIYLEEASTLKELNTKIDLVLHGKRENETFREEIETLRNLLKSMELPESFDEFKKELMQKSGLKGKKFFKPLRILLTGSEHGPELSELYPAIKNRIKEVIQ.

Residues 6–16 (PSPTGDMHIGN) carry the 'HIGH' region motif. Residues 235 to 239 (KMSKR) carry the 'KMSKS' region motif. ATP is bound at residue Lys-238.

It belongs to the class-I aminoacyl-tRNA synthetase family. Glutamate--tRNA ligase type 1 subfamily. In terms of assembly, monomer.

It localises to the cytoplasm. The catalysed reaction is tRNA(Glu) + L-glutamate + ATP = L-glutamyl-tRNA(Glu) + AMP + diphosphate. Functionally, catalyzes the attachment of glutamate to tRNA(Glu) in a two-step reaction: glutamate is first activated by ATP to form Glu-AMP and then transferred to the acceptor end of tRNA(Glu). This chain is Glutamate--tRNA ligase 1, found in Nitratiruptor sp. (strain SB155-2).